Consider the following 20-residue polypeptide: Cuticle-degrading protease-like protein (20 aa).

The interval 1–20 (AIVEQQGAPXGLGRIINKXK) is disordered.

Belongs to the peptidase S8 family.

The protein resides in the secreted. Its function is as follows. Capable of breaching the insect cuticle. This is Cuticle-degrading protease-like protein from Metacordyceps chlamydosporia (Nematophagous fungus).